Consider the following 515-residue polypeptide: Bifunctional purine biosynthesis protein PurH (515 aa).

In terms of domain architecture, MGS-like spans 1–145; it reads MTKRALISVS…KNHASVTVVV (145 aa).

It belongs to the PurH family.

It catalyses the reaction (6R)-10-formyltetrahydrofolate + 5-amino-1-(5-phospho-beta-D-ribosyl)imidazole-4-carboxamide = 5-formamido-1-(5-phospho-D-ribosyl)imidazole-4-carboxamide + (6S)-5,6,7,8-tetrahydrofolate. The catalysed reaction is IMP + H2O = 5-formamido-1-(5-phospho-D-ribosyl)imidazole-4-carboxamide. It participates in purine metabolism; IMP biosynthesis via de novo pathway; 5-formamido-1-(5-phospho-D-ribosyl)imidazole-4-carboxamide from 5-amino-1-(5-phospho-D-ribosyl)imidazole-4-carboxamide (10-formyl THF route): step 1/1. The protein operates within purine metabolism; IMP biosynthesis via de novo pathway; IMP from 5-formamido-1-(5-phospho-D-ribosyl)imidazole-4-carboxamide: step 1/1. In Streptococcus pyogenes serotype M2 (strain MGAS10270), this protein is Bifunctional purine biosynthesis protein PurH.